Reading from the N-terminus, the 228-residue chain is Max-interacting protein 1 (228 aa).

Disordered stretches follow at residues 29–76 and 162–228; these read GYAS…NELE and GSTI…SFTS. Residues 43–56 are compositionally biased toward basic residues; sequence QHSKPPRRLSRAQK. Positions 57–70 are enriched in polar residues; it reads HSSGSSNTSTANRS. Positions 67–119 constitute a bHLH domain; the sequence is ANRSTHNELEKNRRAHLRLCLERLKVLIPLGPDCTRHTTLGLLNKAKAHIKKL. Positions 173 to 183 are enriched in acidic residues; the sequence is EREEIEVDVES. The segment covering 216-228 has biased composition (polar residues); that stretch reads GYSSASVKLSFTS.

Efficient DNA binding requires dimerization with another bHLH protein. Binds DNA as a heterodimer with MAX. Interacts with SMC3. Interacts with RNF17.

It localises to the nucleus. Its function is as follows. Transcriptional repressor. MXI1 binds with MAX to form a sequence-specific DNA-binding protein complex which recognizes the core sequence 5'-CAC[GA]TG-3'. MXI1 thus antagonizes MYC transcriptional activity by competing for MAX. The protein is Max-interacting protein 1 (Mxi1) of Rattus norvegicus (Rat).